The following is a 470-amino-acid chain: tRNA-2-methylthio-N(6)-dimethylallyladenosine synthase (470 aa).

The MTTase N-terminal domain occupies 20-138 (PRVHIETFGC…LPELVERARS (119 aa)). Positions 29, 65, 99, 176, 180, and 183 each coordinate [4Fe-4S] cluster. A Radical SAM core domain is found at 162–398 (REGDLKAWVT…MEVQNRIARA (237 aa)). Residues 401–464 (EARVGKVYDI…TWTLEGELVE (64 aa)) enclose the TRAM domain.

The protein belongs to the methylthiotransferase family. MiaB subfamily. As to quaternary structure, monomer. [4Fe-4S] cluster is required as a cofactor.

Its subcellular location is the cytoplasm. The enzyme catalyses N(6)-dimethylallyladenosine(37) in tRNA + (sulfur carrier)-SH + AH2 + 2 S-adenosyl-L-methionine = 2-methylsulfanyl-N(6)-dimethylallyladenosine(37) in tRNA + (sulfur carrier)-H + 5'-deoxyadenosine + L-methionine + A + S-adenosyl-L-homocysteine + 2 H(+). In terms of biological role, catalyzes the methylthiolation of N6-(dimethylallyl)adenosine (i(6)A), leading to the formation of 2-methylthio-N6-(dimethylallyl)adenosine (ms(2)i(6)A) at position 37 in tRNAs that read codons beginning with uridine. The polypeptide is tRNA-2-methylthio-N(6)-dimethylallyladenosine synthase (Symbiobacterium thermophilum (strain DSM 24528 / JCM 14929 / IAM 14863 / T)).